The sequence spans 871 residues: MSFSEMNRRTLAFRGGGLVTASGGGSTNNNAGGEASAWPPQPQPRQPPPPAPPALQPPNGRGADEEVELEGLEPQDLEASAGPAAGAAEEAKELLLPQDAGGPTSLGGGAGGPLLAERNRRTLAFRGGGGGGLGNNGSSRGRPETSVWPLRHFNGRGPATVDLELDALEGKELMQDGASLSDSTEDEEEGASLGDGSGAEGGSCSSSRRSGGDGGDEVEGSGVGAGEGETVQHFPLARPKSLMQKLQCSFQTSWLKDFPWLRYSKDTGLMSCGWCQKTPADGGSVDLPPVGHDELSRGTRNYKKTLLLRHHVSTEHKLHEANAQESEIPSEEGYCDFNSRPNENSYCYQLLRQLNEQRKKGILCDVSIVVSGKIFKAHKNILVAGSRFFKTLYCFSNKESPNQNNTTHLDIAAVQGFSVILDFLYSGNLVLTSQNAIEVMTVASYLQMSEVVQTCRNFIKDALNISIKSEAPESVVVDYNNRKPVNRDGLSSSRDQKIASFWATRNLTNLASNVKIENDGCNVDEGQIENYQMNDSSWVQDGSPEMAENESEGQTKVFIWNNMGSQGIQETGKTRRKNQTTKRFIYNIPPNNETNLEDCSVMQPPVAYPEENTLLIKEEPDLDGALLSGPDGDRNVNANLLAEAGTSQDGGDAGTSHDFKYGLMPGPSNDFKYGLIPGTSNDFKYGLIPGASNDFKYGLLPESWPKQETWENGESSLIMNKLKCPHCSYVAKYRRTLKRHLLIHTGVRSFSCDICGKLFTRREHVKRHSLVHKKDKKYKCMVCKKIFMLAASVGIRHGSRRYGVCVDCADKSQPGGQEGVDQGQDTEFPRDEEYEENEVGEADEELVDDGEDQNDPSRWDESGEVCMSLDD.

Disordered regions lie at residues 1-156 and 177-228; these read MSFS…FNGR and GASL…AGEG. Over residues 14–26 the composition is skewed to gly residues; the sequence is RGGGLVTASGGGS. Residues 27–37 show a composition bias toward low complexity; that stretch reads TNNNAGGEASA. Residues 39-56 are compositionally biased toward pro residues; that stretch reads PPQPQPRQPPPPAPPALQ. Acidic residues predominate over residues 65-76; it reads EEVELEGLEPQD. A compositionally biased stretch (low complexity) spans 77–103; it reads LEASAGPAAGAAEEAKELLLPQDAGGP. Arg-126 is subject to Omega-N-methylarginine. A compositionally biased stretch (gly residues) spans 126–135; that stretch reads RGGGGGGLGN. Ser-210 bears the Phosphoserine mark. Lys-245 participates in a covalent cross-link: Glycyl lysine isopeptide (Lys-Gly) (interchain with G-Cter in SUMO2). Residues 364–433 form the BTB domain; sequence CDVSIVVSGK…LYSGNLVLTS (70 aa). Residues Lys-468, Lys-483, and Lys-497 each participate in a glycyl lysine isopeptide (Lys-Gly) (interchain with G-Cter in SUMO2) cross-link. Position 565 is a phosphoserine (Ser-565). Residues Lys-573, Lys-672, Lys-684, Lys-696, and Lys-706 each participate in a glycyl lysine isopeptide (Lys-Gly) (interchain with G-Cter in SUMO2) cross-link. 2 C2H2-type zinc fingers span residues 722 to 744 and 750 to 772; these read LKCPHCSYVAKYRRTLKRHLLIH and FSCDICGKLFTRREHVKRHSLVH. The tract at residues 812 to 871 is disordered; sequence SQPGGQEGVDQGQDTEFPRDEEYEENEVGEADEELVDDGEDQNDPSRWDESGEVCMSLDD. Acidic residues predominate over residues 830–854; that stretch reads RDEEYEENEVGEADEELVDDGEDQN.

The protein localises to the nucleus. May be involved in transcriptional regulation. This is Zinc finger and BTB domain-containing protein 10 (ZBTB10) from Homo sapiens (Human).